A 517-amino-acid polypeptide reads, in one-letter code: Ovoinhibitor (517 aa).

7 consecutive Kazal-like domains span residues phenylalanine 67–proline 132, lysine 133–leucine 197, glutamate 198–glutamine 263, glutamate 264–glutamate 329, arginine 330–glutamate 394, glutamate 395–glutamate 460, and aspartate 461–cysteine 517. N-linked (GlcNAc...) asparagine glycosylation is present at asparagine 72. Cystine bridges form between cysteine 73–cysteine 112, cysteine 90–cysteine 109, cysteine 98–cysteine 130, cysteine 139–cysteine 177, cysteine 155–cysteine 174, cysteine 163–cysteine 195, cysteine 204–cysteine 243, cysteine 221–cysteine 240, cysteine 229–cysteine 261, cysteine 270–cysteine 309, cysteine 287–cysteine 306, cysteine 295–cysteine 327, cysteine 336–cysteine 374, cysteine 352–cysteine 371, cysteine 360–cysteine 392, cysteine 401–cysteine 440, cysteine 418–cysteine 437, cysteine 426–cysteine 458, cysteine 467–cysteine 499, cysteine 477–cysteine 496, and cysteine 485–cysteine 517. The N-linked (GlcNAc...) asparagine glycan is linked to asparagine 186. The N-linked (GlcNAc...) asparagine glycan is linked to asparagine 506.

Post-translationally, glycosylated. As to expression, expressed in oviduct (at protein level). Expressed in egg white (at protein level). Expressed in egg yolk plasma of non-fertilized eggs (at protein level). Expressed in the magnum of the oviduct (at protein level). Expressed in oviduct. Expressed in liver. Expressed in the cortico-medullary border region of the bursa of Fabricius by the bursal secretory dendritic-like cells. Highly expressed in the magnum of the oviduct, and at a lower level in uterus. Weakly expressed in white isthmus and very weakly in infundibulum. Not expressed in duodenum and kidney.

It localises to the secreted. Functionally, serine protease inhibitor involved in antimicrobial egg defense preventing contamination of table eggs (non-fertilized eggs) and protecting the chick embryo (fertilized eggs). Inhibits trypsin, chymotrypsin, elastase, subtilisin and a proteinase of fungus Aspergillus oryzae. Inhibits calcium-activated potassium channels KCNMA1 (bovine) and slo (Drosophila). Has antibacterial activity against B.thuringiensis LMSA 3.06.004, but not against S.aureus CIP 103 811, P.aeruginosa PAO1, B.cereus ATCC6464 or B.subtilis ATCC 6633. This Gallus gallus (Chicken) protein is Ovoinhibitor.